Consider the following 470-residue polypeptide: Cysteine--tRNA ligase (470 aa).

Cys-27 contacts Zn(2+). Positions Pro-29–Asn-39 match the 'HIGH' region motif. Zn(2+)-binding residues include Cys-207, His-232, and Glu-236. The 'KMSKS' region motif lies at Lys-264–Ser-268. Lys-267 is a binding site for ATP.

Belongs to the class-I aminoacyl-tRNA synthetase family. As to quaternary structure, monomer. It depends on Zn(2+) as a cofactor.

It localises to the cytoplasm. It carries out the reaction tRNA(Cys) + L-cysteine + ATP = L-cysteinyl-tRNA(Cys) + AMP + diphosphate. This Lachnoclostridium phytofermentans (strain ATCC 700394 / DSM 18823 / ISDg) (Clostridium phytofermentans) protein is Cysteine--tRNA ligase.